The chain runs to 270 residues: Phosphatidylglycerol--prolipoprotein diacylglyceryl transferase (270 aa).

Helical transmembrane passes span 19 to 39 (FPVY…LWLA), 56 to 76 (LVLI…VIFE), 92 to 112 (QGGL…ILFA), and 116 to 136 (GVSF…GQAI). Arginine 138 provides a ligand contact to a 1,2-diacyl-sn-glycero-3-phospho-(1'-sn-glycerol). 3 consecutive transmembrane segments (helical) span residues 178 to 198 (HPTF…LLAL), 206 to 226 (GELF…VEGL), and 236 to 256 (LRIA…FIIV).

This sequence belongs to the Lgt family.

It is found in the cell membrane. It catalyses the reaction L-cysteinyl-[prolipoprotein] + a 1,2-diacyl-sn-glycero-3-phospho-(1'-sn-glycerol) = an S-1,2-diacyl-sn-glyceryl-L-cysteinyl-[prolipoprotein] + sn-glycerol 1-phosphate + H(+). Its pathway is protein modification; lipoprotein biosynthesis (diacylglyceryl transfer). Functionally, catalyzes the transfer of the diacylglyceryl group from phosphatidylglycerol to the sulfhydryl group of the N-terminal cysteine of a prolipoprotein, the first step in the formation of mature lipoproteins. In Bacillus cereus (strain ZK / E33L), this protein is Phosphatidylglycerol--prolipoprotein diacylglyceryl transferase.